The chain runs to 72 residues: SRY-related protein AES6 (72 aa).

Positions 1–69 form a DNA-binding region, HMG box; sequence VKRPMNAFMV…KHMADYPDYK (69 aa).

The protein resides in the nucleus. The chain is SRY-related protein AES6 from Alligator mississippiensis (American alligator).